The sequence spans 352 residues: C-C chemokine receptor type 5 (352 aa).

At 1 to 30 (MDYQVSSPTYDIDYYTSEPCQKINVKQIAA) the chain is on the extracellular side. Tyr3 carries the sulfotyrosine modification. Ser6 and Ser7 each carry an O-linked (GalNAc...) serine glycan. Residues Tyr10, Tyr14, and Tyr15 each carry the sulfotyrosine modification. Cystine bridges form between Cys20–Cys269 and Cys101–Cys178. Residues 31 to 58 (RLLPPLYSLVFIFGFVGNILVVLILINC) traverse the membrane as a helical segment. Over 59–68 (KRLKSMTDIY) the chain is Cytoplasmic. A helical membrane pass occupies residues 69-89 (LLNLAISDLLFLLTVPFWAHY). The Extracellular portion of the chain corresponds to 90–102 (AAAQWDFGNTMCQ). The helical transmembrane segment at 103–124 (LLTGLYFIGFFSGIFFIILLTI) threads the bilayer. At 125–141 (DRYLAIVHAVFALKART) the chain is on the cytoplasmic side. Residues 142 to 166 (VTFGVVTSVITWVVAVFASLPGIIF) traverse the membrane as a helical segment. The Extracellular segment spans residues 167–198 (TRSQREGLHYTCSSHFPYSQYQFWKNFQTLKM). A helical transmembrane segment spans residues 199–218 (VILGLVLPLLVMVICYSGIL). The Cytoplasmic segment spans residues 219 to 235 (KTLLRCRNEKKRHRAVR). The helical transmembrane segment at 236–260 (LIFTIMIVYFLFWAPYNIVLLLNTF) threads the bilayer. Residues 261–277 (QEFFGLNNCSSSNRLDQ) are Extracellular-facing. A helical membrane pass occupies residues 278–301 (AMQVTETLGMTHCCINPIIYAFVG). At 302 to 352 (EKFRNYLLVFFQKHIAKRFCKCCSIFQQEAPERASSVYTRSTAEQEISVGL) the chain is on the cytoplasmic side. 3 S-palmitoyl cysteine lipidation sites follow: Cys321, Cys323, and Cys324. Ser336, Ser337, Ser342, and Ser349 each carry phosphoserine; by BARK1.

It belongs to the G-protein coupled receptor 1 family. As to quaternary structure, interacts with PRAF2. Efficient ligand binding to CCL3/MIP-1alpha and CCL4/MIP-1beta requires sulfation, O-glycosylation and sialic acid modifications. Glycosylation on Ser-6 is required for efficient binding of CCL4. Interacts with GRK2. Interacts with ARRB1 and ARRB2. Interacts with CNIH4. Interacts with S100A4; this interaction stimulates T-lymphocyte chemotaxis. Sulfated on at least 2 of the N-terminal tyrosines. Sulfation is required for efficient binding of the chemokines, CCL3 and CCL4. In terms of processing, palmitoylation in the C-terminal is important for cell surface expression. Post-translationally, phosphorylation on serine residues in the C-terminal is stimulated by binding CC chemokines especially by APO-RANTES. O-glycosylated, but not N-glycosylated. Ser-6 appears to be the major site even if Ser-7 may be also O-glycosylated. Also sialylated glycans present which contribute to chemokine binding. Thr-16 and Ser-17 may also be glycosylated and, if so, with small moieties such as a T-antigen.

Its subcellular location is the cell membrane. In terms of biological role, receptor for a number of inflammatory CC-chemokines including CCL3/MIP-1-alpha, CCL4/MIP-1-beta and RANTES and subsequently transduces a signal by increasing the intracellular calcium ion level. May play a role in the control of granulocytic lineage proliferation or differentiation. Participates in T-lymphocyte migration to the infection site by acting as a chemotactic receptor. This chain is C-C chemokine receptor type 5 (CCR5), found in Macaca arctoides (Stump-tailed macaque).